Reading from the N-terminus, the 260-residue chain is 4-hydroxy-tetrahydrodipicolinate reductase (260 aa).

Residues 12 to 17 (GFRGKM), 92 to 94 (GTT), and 118 to 121 (APNF) contribute to the NAD(+) site. The active-site Proton donor/acceptor is the H148. H149 is a binding site for (S)-2,3,4,5-tetrahydrodipicolinate. K152 functions as the Proton donor in the catalytic mechanism. 158–159 (GT) serves as a coordination point for (S)-2,3,4,5-tetrahydrodipicolinate.

It belongs to the DapB family.

The protein resides in the cytoplasm. It carries out the reaction (S)-2,3,4,5-tetrahydrodipicolinate + NAD(+) + H2O = (2S,4S)-4-hydroxy-2,3,4,5-tetrahydrodipicolinate + NADH + H(+). The catalysed reaction is (S)-2,3,4,5-tetrahydrodipicolinate + NADP(+) + H2O = (2S,4S)-4-hydroxy-2,3,4,5-tetrahydrodipicolinate + NADPH + H(+). The protein operates within amino-acid biosynthesis; L-lysine biosynthesis via DAP pathway; (S)-tetrahydrodipicolinate from L-aspartate: step 4/4. Functionally, catalyzes the conversion of 4-hydroxy-tetrahydrodipicolinate (HTPA) to tetrahydrodipicolinate. The chain is 4-hydroxy-tetrahydrodipicolinate reductase from Lactococcus lactis subsp. cremoris (strain MG1363).